The sequence spans 118 residues: Large ribosomal subunit protein uL18 (118 aa).

Belongs to the universal ribosomal protein uL18 family. Part of the 50S ribosomal subunit; part of the 5S rRNA/L5/L18/L25 subcomplex. Contacts the 5S and 23S rRNAs.

This is one of the proteins that bind and probably mediate the attachment of the 5S RNA into the large ribosomal subunit, where it forms part of the central protuberance. This Campylobacter jejuni subsp. jejuni serotype O:2 (strain ATCC 700819 / NCTC 11168) protein is Large ribosomal subunit protein uL18.